A 670-amino-acid polypeptide reads, in one-letter code: DNA ligase (670 aa).

Residues 34-38, 83-84, and E117 contribute to the NAD(+) site; these read DAEYD and SL. The N6-AMP-lysine intermediate role is filled by K119. NAD(+)-binding residues include R140, E177, K293, and K317. Residues C411, C414, C429, and C434 each contribute to the Zn(2+) site. One can recognise a BRCT domain in the interval 591-670; the sequence is KVGGRFTGKT…DEFLAMLEEG (80 aa).

This sequence belongs to the NAD-dependent DNA ligase family. LigA subfamily. The cofactor is Mg(2+). Mn(2+) serves as cofactor.

It carries out the reaction NAD(+) + (deoxyribonucleotide)n-3'-hydroxyl + 5'-phospho-(deoxyribonucleotide)m = (deoxyribonucleotide)n+m + AMP + beta-nicotinamide D-nucleotide.. In terms of biological role, DNA ligase that catalyzes the formation of phosphodiester linkages between 5'-phosphoryl and 3'-hydroxyl groups in double-stranded DNA using NAD as a coenzyme and as the energy source for the reaction. It is essential for DNA replication and repair of damaged DNA. The chain is DNA ligase from Geobacter sulfurreducens (strain ATCC 51573 / DSM 12127 / PCA).